We begin with the raw amino-acid sequence, 469 residues long: Acetyl-CoA decarbonylase/synthase complex subunit beta 1 (469 aa).

[Ni-Fe-S] cluster-binding residues include cysteine 189, cysteine 192, cysteine 278, and cysteine 280.

This sequence belongs to the CdhC family. As to quaternary structure, monomer. The ACDS complex is made up of alpha, epsilon, beta, gamma and delta chains with a probable stoichiometry of (alpha(2)epsilon(2))(4)-beta(8)-(gamma(1)delta(1))(8) (Potential). The cofactor is [Ni-Fe-S] cluster.

The enzyme catalyses Co(I)-[corrinoid Fe-S protein] + acetyl-CoA + H(+) = methyl-Co(III)-[corrinoid Fe-S protein] + CO + CoA. Its pathway is one-carbon metabolism; methanogenesis from acetate. Functionally, part of a complex that catalyzes the reversible cleavage of acetyl-CoA, allowing growth on acetate as sole source of carbon and energy. The alpha-epsilon complex generates CO from CO(2), while the beta subunit (this protein) combines the CO with CoA and a methyl group to form acetyl-CoA. The methyl group, which is incorporated into acetyl-CoA, is transferred to the beta subunit by a corrinoid iron-sulfur protein (the gamma-delta complex). In Methanosarcina acetivorans (strain ATCC 35395 / DSM 2834 / JCM 12185 / C2A), this protein is Acetyl-CoA decarbonylase/synthase complex subunit beta 1 (cdhC1).